The chain runs to 2258 residues: Genome polyprotein 1 (2258 aa).

The 159-residue stretch at 439-597 (SMAQEAKQWS…AVRRYEIKTV (159 aa)) folds into the Helicase ATP-binding domain. 487–494 (RAATVNVT) is a binding site for ATP. Positions 612-778 (DKENSLYVLQ…GVQFYINEHF (167 aa)) constitute a Helicase C-terminal domain. Tyrosine 1141 carries the post-translational modification O-(5'-phospho-RNA)-tyrosine. The 220-residue stretch at 1257-1476 (ATLEGMTMKP…TKPRNMQSAP (220 aa)) folds into the Peptidase C4 domain. Active-site for nuclear inclusion protein A activity residues include histidine 1302, aspartate 1338, and cysteine 1405. Residues 1745 to 1869 (WTHGSGDGSR…AMSPSFMVKF (125 aa)) form the RdRp catalytic domain. 2 disordered regions span residues 2027–2047 (NMAA…RGTS) and 2233–2258 (TSEQ…ALLR). The span at 2242-2258 (TETRRRNDYDGHEALLR) shows a compositional bias: basic and acidic residues.

This sequence belongs to the bymoviruses polyprotein 1 family. Post-translationally, VPg is uridylylated by the polymerase and is covalently attached to the 5'-end of the genomic RNA. This uridylylated form acts as a nucleotide-peptide primer for the polymerase. In terms of processing, the viral RNA1 of bymoviruses is expressed as a single polyprotein which undergoes post-translational proteolytic processing by the main proteinase NIa-pro resulting in the production of at least eight individual proteins.

The protein localises to the host cytoplasmic vesicle. It is found in the virion. The enzyme catalyses RNA(n) + a ribonucleoside 5'-triphosphate = RNA(n+1) + diphosphate. It carries out the reaction Hydrolyzes glutaminyl bonds, and activity is further restricted by preferences for the amino acids in P6 - P1' that vary with the species of potyvirus, e.g. Glu-Xaa-Xaa-Tyr-Xaa-Gln-|-(Ser or Gly) for the enzyme from tobacco etch virus. The natural substrate is the viral polyprotein, but other proteins and oligopeptides containing the appropriate consensus sequence are also cleaved.. Its function is as follows. Indispensable for virus replication. Mediates the cap-independent, EIF4E-dependent translation of viral genomic RNAs. Binds to the cap-binding site of host EIF4E and thus interferes with the host EIF4E-dependent mRNA export and translation. VPg-RNA directly binds EIF4E and is a template for transcription. Also forms trimeric complexes with EIF4E-EIF4G, which are templates for translation. Functionally, has RNA-binding and proteolytic activities. In terms of biological role, an RNA-dependent RNA polymerase that plays an essential role in the virus replication. The chain is Genome polyprotein 1 from Barley mild mosaic virus (strain Na1) (BaMMV).